The primary structure comprises 64 residues: Large ribosomal subunit protein bL35 (64 aa).

It belongs to the bacterial ribosomal protein bL35 family.

The polypeptide is Large ribosomal subunit protein bL35 (Kineococcus radiotolerans (strain ATCC BAA-149 / DSM 14245 / SRS30216)).